The primary structure comprises 374 residues: tRNA-specific 2-thiouridylase MnmA (374 aa).

Residues 17–24 and M43 contribute to the ATP site; that span reads GMSGGVDS. The tract at residues 103–105 is interaction with target base in tRNA; that stretch reads NPD. C108 acts as the Nucleophile in catalysis. A disulfide bridge links C108 with C204. G132 provides a ligand contact to ATP. Residues 154-156 form an interaction with tRNA region; the sequence is KDQ. C204 (cysteine persulfide intermediate) is an active-site residue. The segment at 316-317 is interaction with tRNA; the sequence is RY.

This sequence belongs to the MnmA/TRMU family.

It is found in the cytoplasm. The enzyme catalyses S-sulfanyl-L-cysteinyl-[protein] + uridine(34) in tRNA + AH2 + ATP = 2-thiouridine(34) in tRNA + L-cysteinyl-[protein] + A + AMP + diphosphate + H(+). Functionally, catalyzes the 2-thiolation of uridine at the wobble position (U34) of tRNA, leading to the formation of s(2)U34. This is tRNA-specific 2-thiouridylase MnmA from Pseudomonas entomophila (strain L48).